An 82-amino-acid chain; its full sequence is uncharacterized protein (82 aa).

This is an uncharacterized protein from Orgyia pseudotsugata multicapsid polyhedrosis virus (OpMNPV).